We begin with the raw amino-acid sequence, 2297 residues long: Serine/threonine-protein kinase WNK2 (2297 aa).

Basic and acidic residues predominate over residues 1–10 (MDGDGGRRDV). 2 disordered regions span residues 1–75 (MDGD…QRRV) and 89–183 (ARGR…EDDL). Omega-N-methylarginine is present on residues arginine 19 and arginine 30. Serine 45 carries the post-translational modification Phosphoserine. Low complexity predominate over residues 92 to 120 (RPAAPAPAALVAQPGAPGAPADAGPEPVG). The segment covering 142–172 (GPREEAAATVRKEDEGAAEAKPEPGRTRRDE) has biased composition (basic and acidic residues). Residues 173 to 182 (PEEEEDDEDD) are compositionally biased toward acidic residues. A Protein kinase domain is found at 195–453 (LKFDIELGRG…IKDLLSHAFF (259 aa)). ATP is bound by residues serine 205, 275–278 (TELM), and lysine 325. The active-site Proton acceptor is aspartate 342. 2 positions are modified to phosphoserine; by autocatalysis: serine 352 and serine 356. Serine 560 carries the post-translational modification Phosphoserine. 8 disordered regions span residues 579–630 (AQAG…DSQS), 699–751 (FPDP…PVVP), 917–1022 (PQMA…PGSQ), 1117–1185 (PVQE…ERAS), 1262–1297 (SEDT…SQAN), 1323–1345 (APEA…ASQG), 1374–1480 (SAQS…HEAP), and 1492–1586 (PCTP…DSTI). Polar residues predominate over residues 604–625 (PTSATSLASDSTFDSGQGSTVY). Pro residues-rich tracts occupy residues 709 to 740 (VLPP…PTPL) and 939 to 1007 (PPQP…PLQP). Phosphoserine is present on serine 1150. Over residues 1167-1178 (ARKHHRRSTRAR) the composition is skewed to basic residues. Position 1262 is a phosphoserine (serine 1262). Positions 1392 to 1406 (SKEQPSFLASQQLLS) are enriched in polar residues. A compositionally biased stretch (pro residues) spans 1411–1426 (SNPPGAPPAPLAPSSP). Composition is skewed to polar residues over residues 1439 to 1453 (ATST…TASQ) and 1461 to 1473 (QGLT…SQPL). Residues 1510–1520 (EPLPPPAPEPS) are compositionally biased toward pro residues. The segment covering 1526–1544 (PQPALGQPAPLLPAAVGAV) has biased composition (low complexity). Pro residues predominate over residues 1552 to 1565 (PSPPLGPTVPPQPP). The residue at position 1588 (serine 1588) is a Phosphoserine. Positions 1621–1631 (TLEPLRGDQPR) are enriched in basic and acidic residues. The tract at residues 1621 to 1865 (TLEPLRGDQP…PVQKQASLPV (245 aa)) is disordered. The span at 1675–1688 (QGTSSSMTAESSPR) shows a compositional bias: polar residues. Residue serine 1685 is modified to Phosphoserine. Over residues 1721-1731 (ARVEPTDRDGG) the composition is skewed to basic and acidic residues. Phosphoserine occurs at positions 1736, 1817, 1818, 1862, and 1889. Disordered regions lie at residues 1970–1990 (NVGF…SKSK) and 2011–2031 (TGHL…QASV). Over residues 1981–1990 (GRRRKTSKSK) the composition is skewed to basic residues. Residue serine 2067 is modified to Phosphoserine. Disordered stretches follow at residues 2123–2142 (SRSS…QPAL) and 2269–2297 (CCGH…PVRS). Residues 2272–2289 (HSTQPRGGQRVGSKTASF) are compositionally biased toward polar residues.

It belongs to the protein kinase superfamily. Ser/Thr protein kinase family. WNK subfamily. Forms a complex with the phosphorylated form of STK39. Requires Mg(2+) as cofactor. Autophosphorylated. Autophosphorylation at Ser-352 and Ser-356 promotes its activity. As to expression, expressed in various cancer cell lines (at protein level). Predominantly expressed in heart, brain, skeletal muscle and colon.

It is found in the cytoplasm. It localises to the cell membrane. The catalysed reaction is L-seryl-[protein] + ATP = O-phospho-L-seryl-[protein] + ADP + H(+). The enzyme catalyses L-threonyl-[protein] + ATP = O-phospho-L-threonyl-[protein] + ADP + H(+). With respect to regulation, activation requires autophosphorylation of Ser-356 and, to a lower extent, Ser-352. Its function is as follows. Serine/threonine-protein kinase component of the WNK2-SPAK/OSR1 kinase cascade, which plays an important role in the regulation of electrolyte homeostasis, cell signaling, survival, and proliferation. The WNK2-SPAK/OSR1 kinase cascade is composed of WNK2, which mediates phosphorylation and activation of downstream kinases OXSR1/OSR1 and STK39/SPAK. Following activation, OXSR1/OSR1 and STK39/SPAK catalyze phosphorylation of ion cotransporters, regulating their activity. Acts as an activator and inhibitor of sodium-coupled chloride cotransporters and potassium-coupled chloride cotransporters respectively. Activates SLC12A2, SCNN1A, SCNN1B, SCNN1D and SGK1 and inhibits SLC12A5. Negatively regulates the EGF-induced activation of the ERK/MAPK-pathway and the downstream cell cycle progression. Affects MAPK3/MAPK1 activity by modulating the activity of MAP2K1 and this modulation depends on phosphorylation of MAP2K1 by PAK1. WNK2 acts by interfering with the activity of PAK1 by controlling the balance of the activity of upstream regulators of PAK1 activity, RHOA and RAC1, which display reciprocal activity. The sequence is that of Serine/threonine-protein kinase WNK2 from Homo sapiens (Human).